Consider the following 157-residue polypeptide: Transcription elongation factor GreA (157 aa).

Residues 14-37 are a coiled coil; sequence LREELDRLLKLRPKITEAIAEARE.

The protein belongs to the GreA/GreB family.

Functionally, necessary for efficient RNA polymerase transcription elongation past template-encoded arresting sites. The arresting sites in DNA have the property of trapping a certain fraction of elongating RNA polymerases that pass through, resulting in locked ternary complexes. Cleavage of the nascent transcript by cleavage factors such as GreA or GreB allows the resumption of elongation from the new 3'terminus. GreA releases sequences of 2 to 3 nucleotides. The protein is Transcription elongation factor GreA of Vibrio cholerae serotype O1 (strain ATCC 39315 / El Tor Inaba N16961).